We begin with the raw amino-acid sequence, 178 residues long: 2-C-methyl-D-erythritol 2,4-cyclodiphosphate synthase (178 aa).

Residues aspartate 24, histidine 26, and histidine 61 each contribute to the a divalent metal cation site. A 4-CDP-2-C-methyl-D-erythritol 2-phosphate-binding site is contributed by aspartate 24–histidine 26. 4-CDP-2-C-methyl-D-erythritol 2-phosphate is bound at residue threonine 150 to glutamate 153.

Belongs to the IspF family. Homotrimer. Requires a divalent metal cation as cofactor.

The catalysed reaction is 4-CDP-2-C-methyl-D-erythritol 2-phosphate = 2-C-methyl-D-erythritol 2,4-cyclic diphosphate + CMP. It participates in isoprenoid biosynthesis; isopentenyl diphosphate biosynthesis via DXP pathway; isopentenyl diphosphate from 1-deoxy-D-xylulose 5-phosphate: step 4/6. Its function is as follows. Involved in the biosynthesis of isopentenyl diphosphate (IPP) and dimethylallyl diphosphate (DMAPP), two major building blocks of isoprenoid compounds. Catalyzes the conversion of 4-diphosphocytidyl-2-C-methyl-D-erythritol 2-phosphate (CDP-ME2P) to 2-C-methyl-D-erythritol 2,4-cyclodiphosphate (ME-CPP) with a corresponding release of cytidine 5-monophosphate (CMP). The chain is 2-C-methyl-D-erythritol 2,4-cyclodiphosphate synthase from Chlamydia trachomatis serovar L2b (strain UCH-1/proctitis).